We begin with the raw amino-acid sequence, 462 residues long: Anthranilate synthase component 1 (462 aa).

L-tryptophan contacts are provided by residues S46 and 243 to 245 (PHM). Chorismate is bound at residue 278 to 279 (GT). Residue E305 coordinates Mg(2+). Residues Y394, R414, 428–430 (SGG), and G430 each bind chorismate. E444 provides a ligand contact to Mg(2+).

It belongs to the anthranilate synthase component I family. In terms of assembly, heterotetramer consisting of two non-identical subunits: a beta subunit (TrpG) and a large alpha subunit (TrpE). Mg(2+) serves as cofactor.

The catalysed reaction is chorismate + L-glutamine = anthranilate + pyruvate + L-glutamate + H(+). The protein operates within amino-acid biosynthesis; L-tryptophan biosynthesis; L-tryptophan from chorismate: step 1/5. With respect to regulation, feedback inhibited by tryptophan. Its function is as follows. Part of a heterotetrameric complex that catalyzes the two-step biosynthesis of anthranilate, an intermediate in the biosynthesis of L-tryptophan. In the first step, the glutamine-binding beta subunit (TrpG) of anthranilate synthase (AS) provides the glutamine amidotransferase activity which generates ammonia as a substrate that, along with chorismate, is used in the second step, catalyzed by the large alpha subunit of AS (TrpE) to produce anthranilate. In the absence of TrpG, TrpE can synthesize anthranilate directly from chorismate and high concentrations of ammonia. The chain is Anthranilate synthase component 1 (trpE) from Leptospira biflexa.